Consider the following 276-residue polypeptide: Lipoyl synthase (276 aa).

[4Fe-4S] cluster-binding residues include Cys-27, Cys-32, Cys-38, Cys-53, Cys-57, Cys-60, and Ser-266. The 217-residue stretch at 39 to 255 (FGNKTATFMI…EEIGYEMGFK (217 aa)) folds into the Radical SAM core domain.

The protein belongs to the radical SAM superfamily. Lipoyl synthase family. [4Fe-4S] cluster is required as a cofactor.

It is found in the cytoplasm. It catalyses the reaction [[Fe-S] cluster scaffold protein carrying a second [4Fe-4S](2+) cluster] + N(6)-octanoyl-L-lysyl-[protein] + 2 oxidized [2Fe-2S]-[ferredoxin] + 2 S-adenosyl-L-methionine + 4 H(+) = [[Fe-S] cluster scaffold protein] + N(6)-[(R)-dihydrolipoyl]-L-lysyl-[protein] + 4 Fe(3+) + 2 hydrogen sulfide + 2 5'-deoxyadenosine + 2 L-methionine + 2 reduced [2Fe-2S]-[ferredoxin]. It functions in the pathway protein modification; protein lipoylation via endogenous pathway; protein N(6)-(lipoyl)lysine from octanoyl-[acyl-carrier-protein]: step 2/2. Functionally, catalyzes the radical-mediated insertion of two sulfur atoms into the C-6 and C-8 positions of the octanoyl moiety bound to the lipoyl domains of lipoate-dependent enzymes, thereby converting the octanoylated domains into lipoylated derivatives. The chain is Lipoyl synthase from Aquifex aeolicus (strain VF5).